A 366-amino-acid chain; its full sequence is Glutathione S-transferase omega-like 3 (366 aa).

Cysteine 46 is an active-site residue. Residues 197–349 form the GST C-terminal domain; that stretch reads PRSLEAQITE…LGYTRSQPRV (153 aa).

Belongs to the GST superfamily. Omega family.

The protein localises to the cytoplasm. It catalyses the reaction RX + glutathione = an S-substituted glutathione + a halide anion + H(+). Active as '1-Cys' thiol transferase against beta-hydroxyethyl disulfide (HED), as dehydroascorbate reductase and as dimethylarsinic acid reductase, while not active against the standard GST substrate 1-chloro-2,4-dinitrobenzene (CDNB). The chain is Glutathione S-transferase omega-like 3 (GTO3) from Saccharomyces cerevisiae (strain ATCC 204508 / S288c) (Baker's yeast).